A 216-amino-acid polypeptide reads, in one-letter code: UPF0502 protein Pmen_2627 (216 aa).

It belongs to the UPF0502 family.

This is UPF0502 protein Pmen_2627 from Ectopseudomonas mendocina (strain ymp) (Pseudomonas mendocina).